Here is a 578-residue protein sequence, read N- to C-terminus: 2-succinyl-5-enolpyruvyl-6-hydroxy-3-cyclohexene-1-carboxylate synthase (578 aa).

The segment at 186 to 208 (LPAAGGEHHPAEPRSTPWDGPVP) is disordered.

It belongs to the TPP enzyme family. MenD subfamily. In terms of assembly, homodimer. Mg(2+) serves as cofactor. Requires Mn(2+) as cofactor. Thiamine diphosphate is required as a cofactor.

The enzyme catalyses isochorismate + 2-oxoglutarate + H(+) = 5-enolpyruvoyl-6-hydroxy-2-succinyl-cyclohex-3-ene-1-carboxylate + CO2. It functions in the pathway quinol/quinone metabolism; 1,4-dihydroxy-2-naphthoate biosynthesis; 1,4-dihydroxy-2-naphthoate from chorismate: step 2/7. Its pathway is cofactor biosynthesis; phylloquinone biosynthesis. Its function is as follows. Catalyzes the thiamine diphosphate-dependent decarboxylation of 2-oxoglutarate and the subsequent addition of the resulting succinic semialdehyde-thiamine pyrophosphate anion to isochorismate to yield 2-succinyl-5-enolpyruvyl-6-hydroxy-3-cyclohexene-1-carboxylate (SEPHCHC). This is 2-succinyl-5-enolpyruvyl-6-hydroxy-3-cyclohexene-1-carboxylate synthase from Synechococcus sp. (strain WH7803).